The primary structure comprises 799 residues: Cadherin-8 (799 aa).

Residues 1–29 (MPERLAEMLLDLWTPLIILWITLPPCIYM) form the signal peptide. A propeptide spanning residues 30-61 (APMNQSQVLMSGSPLELNSLGEEQRILNRSKR) is cleaved from the precursor. N-linked (GlcNAc...) asparagine glycans are attached at residues N33 and N57. Cadherin domains lie at 62 to 167 (GWVW…APEF), 168 to 276 (LNGP…PPKF), 277 to 391 (AQSL…PPVF), 392 to 494 (SSPT…DNAP), and 495 to 616 (EFAS…YVLP). Residues 62–621 (GWVWNQMFVL…AYVLPIGLSM (560 aa)) lie on the Extracellular side of the membrane. N188 carries N-linked (GlcNAc...) asparagine glycosylation. N-linked (GlcNAc...) asparagine glycans are attached at residues N463, N473, and N544. Residues 622 to 642 (GALIAILACIILLLVIVVLFV) form a helical membrane-spanning segment. Residues 643–799 (TLRRHKNEPL…YSVGESDKET (157 aa)) lie on the Cytoplasmic side of the membrane. S795 is subject to Phosphoserine.

In terms of tissue distribution, mainly expressed in brain. Found in certain nerve cell lines, such as retinoblasts, glioma cells and neuroblasts.

It is found in the cell membrane. Functionally, cadherins are calcium-dependent cell adhesion proteins. They preferentially interact with themselves in a homophilic manner in connecting cells; cadherins may thus contribute to the sorting of heterogeneous cell types. This Homo sapiens (Human) protein is Cadherin-8 (CDH8).